A 484-amino-acid polypeptide reads, in one-letter code: tRNA-2-methylthio-N(6)-dimethylallyladenosine synthase (484 aa).

In terms of domain architecture, MTTase N-terminal spans 36-153; sequence GKLYIKTHGC…LPELIRARRE (118 aa). [4Fe-4S] cluster-binding residues include Cys-45, Cys-82, Cys-116, Cys-190, Cys-194, and Cys-197. Residues 176-415 enclose the Radical SAM core domain; that stretch reads RAEGPSAFVS…HINAHAASIS (240 aa). Positions 416–479 constitute a TRAM domain; it reads QSMVGSVQRV…SNSLRGRIQL (64 aa). Residues 428–450 are disordered; sequence EGPSRRDPNELTGKSENMRPVNF.

The protein belongs to the methylthiotransferase family. MiaB subfamily. As to quaternary structure, monomer. The cofactor is [4Fe-4S] cluster.

It is found in the cytoplasm. It catalyses the reaction N(6)-dimethylallyladenosine(37) in tRNA + (sulfur carrier)-SH + AH2 + 2 S-adenosyl-L-methionine = 2-methylsulfanyl-N(6)-dimethylallyladenosine(37) in tRNA + (sulfur carrier)-H + 5'-deoxyadenosine + L-methionine + A + S-adenosyl-L-homocysteine + 2 H(+). In terms of biological role, catalyzes the methylthiolation of N6-(dimethylallyl)adenosine (i(6)A), leading to the formation of 2-methylthio-N6-(dimethylallyl)adenosine (ms(2)i(6)A) at position 37 in tRNAs that read codons beginning with uridine. This Xanthomonas axonopodis pv. citri (strain 306) protein is tRNA-2-methylthio-N(6)-dimethylallyladenosine synthase.